A 560-amino-acid polypeptide reads, in one-letter code: MSETVTQTETDQRPATARSLGAEEKEAKSDEQFQQERTIKGFRWFIVIISILSSVTLYSLDNTIVADIQPQIINTFDELDKLPWLSVAFLVACVATNSIWSKIYSQLNAKWLYLFCVVLFEVGSAMCGAAPTINTLIGGRALAGLGGAGLYVGVMTLLSVNTTKRERPMYIGMTGLTWGVGTVLGPIVGGGFAVSKVGWRWSFYINLFFAAVAIPIYLFMLPSFDPRPGVSYKERLAQLDYLGTILMIGACVSGVMAINFGGQIYPWDSGQTISCFVVSGVLFIVFGLQQWYCIGTTKENRTFPCQFLARPAFIILFVQTASVATVFFVPIYFVPLFFQFTRNDSAIDAGVRLLPLVCFIVAAMILNGALMSKFGYYMPWYLVGGCLSLVGSVLMYTIKLGTSTANIYGYMIILGVGGGMYAQASFAVAQGKARPREIPVATGFISLAQLTGGTIALAIANSVFLEKASAGIMAVVPDASKETVQSAISGASSSFFQTLDPDVREAVLAAVTHAISQVYILPITGAAMSISLAIFMPREKLFVASDTGDRDGVTPLGAMG.

The disordered stretch occupies residues 1–32; that stretch reads MSETVTQTETDQRPATARSLGAEEKEAKSDEQ. Basic and acidic residues predominate over residues 21 to 31; the sequence is GAEEKEAKSDE. 8 consecutive transmembrane segments (helical) span residues 45 to 65, 84 to 104, 111 to 131, 141 to 161, 174 to 194, 201 to 221, 242 to 262, and 275 to 295; these read FIVI…NTIV, WLSV…SKIY, WLYL…GAAP, ALAG…LSVN, TGLT…GFAV, WSFY…LFML, LGTI…NFGG, and CFVV…YCIG. Asn-300 carries N-linked (GlcNAc...) asparagine glycosylation. Residues 313–333 traverse the membrane as a helical segment; that stretch reads FIILFVQTASVATVFFVPIYF. N-linked (GlcNAc...) asparagine glycosylation is present at Asn-343. 5 helical membrane-spanning segments follow: residues 346–366, 378–398, 409–429, 440–460, and 515–535; these read AIDA…AMIL, MPWY…MYTI, GYMI…FAVA, VATG…LAIA, and ISQV…LAIF.

This sequence belongs to the major facilitator superfamily. TCR/Tet family.

It is found in the membrane. Its function is as follows. MFS-type transporter; part of the gene cluster that mediates the biosynthesis of pleosporalin A, ascomycone A, as well as a third cryptic naphthoquinone derived pigment, all responsible for the coloration of conidia. Seems not to be involved in pigment biosynthesis although its expression is regulated by the cluster-specific transcription factor pgmR. This is MFS-type transporter pgmG from Aspergillus terreus.